Consider the following 337-residue polypeptide: MTCTIVVGGQWGDEGKGKIISYLCKKDNPSIIARGGVGPNAGHTVEVDGEKYGIRMVPTGFPNVNAKLAVGAGVLTDPEVLLKEIKMLEKFNVGERMIIDYRCGIIEDVHKETDKSNEHLSKEIGSTGTGCGPANVDRAMRTLKQGKDVESISKYLGDVSEEVNEALESGDNVLIEGTQGSLLSLFYGSYPYVTSKDTNAASFAADVGVGPTKIDEVVAVFKSYPTRVGEGPFPTEMTVEEAESLGVVEYGTVTGRRRRVGYFDHDLAKKVCRLNGATQIAITCLDKYDTDCYGIIEYDKLSEKGKAFIKEVEEKVGVKVTLISTGPELGQTIDVRK.

GTP is bound by residues 12–18 (GDEGKGK) and 42–44 (GHT). The active-site Proton acceptor is Asp13. Mg(2+) is bound by residues Asp13 and Gly42. IMP-binding positions include 13–16 (DEGK), 40–43 (NAGH), Thr127, Arg141, Gln179, Thr194, and Arg256. Residue His43 is the Proton donor of the active site. Substrate is bound at residue 252–258 (TVTGRRR). Residues Arg258, 284-286 (CLD), and 324-326 (STG) contribute to the GTP site.

Belongs to the adenylosuccinate synthetase family. In terms of assembly, homodimer. The cofactor is Mg(2+).

Its subcellular location is the cytoplasm. It carries out the reaction IMP + L-aspartate + GTP = N(6)-(1,2-dicarboxyethyl)-AMP + GDP + phosphate + 2 H(+). It functions in the pathway purine metabolism; AMP biosynthesis via de novo pathway; AMP from IMP: step 1/2. Plays an important role in the de novo pathway of purine nucleotide biosynthesis. Catalyzes the first committed step in the biosynthesis of AMP from IMP. The protein is Adenylosuccinate synthetase of Methanococcus maripaludis (strain C5 / ATCC BAA-1333).